The following is a 286-amino-acid chain: D-tagatose-1,6-bisphosphate aldolase subunit KbaY (286 aa).

Catalysis depends on aspartate 82, which acts as the Proton donor. Histidine 83 and histidine 180 together coordinate Zn(2+). Glycine 181 serves as a coordination point for dihydroxyacetone phosphate. Histidine 208 lines the Zn(2+) pocket. Residues 209 to 211 (GAS) and 230 to 233 (NVAT) each bind dihydroxyacetone phosphate.

Belongs to the class II fructose-bisphosphate aldolase family. TagBP aldolase KbaY subfamily. As to quaternary structure, homotetramer. Forms a complex with KbaZ. It depends on Zn(2+) as a cofactor.

The catalysed reaction is D-tagatofuranose 1,6-bisphosphate = D-glyceraldehyde 3-phosphate + dihydroxyacetone phosphate. It functions in the pathway carbohydrate metabolism; D-tagatose 6-phosphate degradation; D-glyceraldehyde 3-phosphate and glycerone phosphate from D-tagatose 6-phosphate: step 2/2. Functionally, catalytic subunit of the tagatose-1,6-bisphosphate aldolase KbaYZ, which catalyzes the reversible aldol condensation of dihydroxyacetone phosphate (DHAP or glycerone-phosphate) with glyceraldehyde 3-phosphate (G3P) to produce tagatose 1,6-bisphosphate (TBP). Requires KbaZ subunit for full activity and stability. In Escherichia coli O17:K52:H18 (strain UMN026 / ExPEC), this protein is D-tagatose-1,6-bisphosphate aldolase subunit KbaY.